Here is a 1299-residue protein sequence, read N- to C-terminus: Protein prickle (1299 aa).

Over residues 1–19 (MSSLSTGGGAGGSSGGPGG) the composition is skewed to gly residues. Disordered regions lie at residues 1-24 (MSSL…DAAA), 115-181 (ADDG…EVTQ), 241-289 (EEES…PQVP), 368-396 (LPRH…PSSS), and 425-527 (LPPH…DDDS). Residues 145-159 (SPRRSKKLLRSLRAH) are compositionally biased toward basic residues. Residues 168–181 (NDTTTANESSEVTQ) are compositionally biased toward polar residues. Pro residues predominate over residues 263–272 (PVPPLPPPPA). Over residues 425 to 434 (LPPHHQQHPG) the composition is skewed to low complexity. Residues 435–445 (AGMGPGPGSGA) are compositionally biased toward gly residues. Residues 457–469 (PGCSANPKYSNAQ) are compositionally biased toward polar residues. The region spanning 515 to 623 (MDMQRQSHSD…NVRQLMSARP (109 aa)) is the PET domain. A compositionally biased stretch (basic and acidic residues) spans 516–525 (DMQRQSHSDD). 3 consecutive LIM zinc-binding domains span residues 622-686 (RPCD…ETLK), 687-747 (PRCS…MFAE), and 748-810 (YCDY…GEPP). Disordered stretches follow at residues 807–865 (GEPP…HQAT), 902–940 (KDLE…GDFQ), and 1026–1249 (ADIL…SSSS). Residues 844–864 (PSSHASSSPPMSPQQQQQHQA) show a composition bias toward low complexity. Polar residues-rich tracts occupy residues 922–934 (RASS…SPLN) and 1070–1081 (SLNTPMSTQSAS). The segment covering 1089-1101 (SILSGASSSSPMS) has biased composition (low complexity). The segment covering 1136-1150 (GERERDRDKDKEGGG) has biased composition (basic and acidic residues). Residues 1151–1183 (RHGHGHSSRRRRRRKSSSSSSHHRSGSGHRSHS) are compositionally biased toward basic residues. Basic and acidic residues predominate over residues 1216 to 1231 (SPSRQQRERERERERE). Low complexity predominate over residues 1238 to 1249 (VCSTCSSSSSSS).

It belongs to the prickle / espinas / testin family. As to quaternary structure, interacts with dsh; PET and LIM domains interact with dsh DEP domain, in wing cells. Interacts with Vang in photoreceptor cells. As to expression, expressed in the wing, leg and eye imaginal disks. Expressed within the photoreceptors of the eye.

The protein localises to the cell membrane. Its function is as follows. Acts in a planar cell polarity (PCP) complex; polarization along the apical/basal axis of epithelial cells. Correct expression of the alternative isoforms is required for PCP signaling in imaginal disks. PCP signaling in the wing disk requires the receptor fz and the cytoplasmic proteins dsh and pk. These act in a feedback loop leading to activation of the jnk cascade and subsequent polarized arrangement of hairs and bristles. Dgo and pk compete with one another for dsh binding, thereby modulating fz dsh activity and ensuring tight control over fz PCP signaling. Vang, stan and pk function together to regulate the establishment of tissue polarity in the adult eye. The sequence is that of Protein prickle from Drosophila melanogaster (Fruit fly).